We begin with the raw amino-acid sequence, 717 residues long: UV-stimulated scaffold protein A (717 aa).

The interval 2 to 145 is VHS-like; that stretch reads DQKLSQLIEE…HFLKHTKKVD (144 aa). Residues 169–199 adopt a coiled-coil conformation; that stretch reads KIHRESADRAKREMEEMYDEIECCLTEVENC. 4 disordered regions span residues 231 to 253, 277 to 301, 389 to 418, and 479 to 503; these read PLSP…EEQP, QTAM…RSHG, PGRG…EKEG, and CLSS…QAER. Residues S284, S291, and S403 each carry the phosphoserine modification. Acidic residues-rich tracts occupy residues 285–294 and 400–412; these read RDEDEPSDPD and LEDS…DFVE. Residue K416 forms a Glycyl lysine isopeptide (Lys-Gly) (interchain with G-Cter in ubiquitin) linkage. The segment covering 479–489 has biased composition (polar residues); that stretch reads CLSSPSPSSTR. The UVSSA-type zinc-finger motif lies at 571–598; the sequence is QHKCRALRPNGRLCERQDRLKCPFHGKI. 4 residues coordinate Zn(2+): C574, C584, C592, and H595. The disordered stretch occupies residues 595–672; it reads HGKIIPRDDK…HPNLTDLRER (78 aa). Residues 599 to 618 are compositionally biased toward basic and acidic residues; sequence IPRDDKGQPLNPEDRAREQR. Residues 652–664 are compositionally biased toward basic residues; sequence SSKKGKGKKKKHP.

Belongs to the UVSSA family. Interacts with the elongating form of RNA polymerase II (RNA pol IIo) during transcription stress. Interacts with the TFIIH complex during transcription stress. Interacts with ERCC6. Interacts with ERCC8. Interacts with USP7. Monoubiquitinated at Lys-416 in response to transcription stress; this promotes efficient transfer of TFIIH to stalled RNA polymerase II.

The protein resides in the chromosome. Its function is as follows. Factor involved in transcription-coupled nucleotide excision repair (TC-NER), a mechanism that rapidly removes RNA polymerase II-blocking lesions from the transcribed strand of active genes. Acts as a key adapter that promotes recruitment of factors involved in TC-NER. Facilitates the ubiquitination of the elongating form of RNA polymerase II (RNA pol IIo) at DNA damage sites, thereby promoting RNA pol IIo backtracking and access by the TC-NER machinery to lesion sites. Also promotes stabilization of ERCC6/CSB by recruiting deubiquitinating enzyme USP7 to TC-NER complexes, preventing UV-induced degradation of ERCC6 by the proteasome. Mediates the recruitment of the TFIIH complex and other factors that are required for nucleotide excision repair to RNA polymerase II. Also required to inactivate stalled RNA polymerase II by blocking the access of TCEA1/TFIIS, thereby preventing reactivation of RNA polymerase II. Not involved in processing oxidative damage. This Mus musculus (Mouse) protein is UV-stimulated scaffold protein A (Uvssa).